The chain runs to 342 residues: 6-hydroxytryprostatin B O-methyltransferase (342 aa).

Aspartate 201 lines the S-adenosyl-L-methionine pocket. The Proton acceptor role is filled by histidine 244.

Belongs to the class I-like SAM-binding methyltransferase superfamily. Cation-independent O-methyltransferase family. Homodimer.

It carries out the reaction 6-hydroxytryprostatin B + S-adenosyl-L-methionine = tryprostatin A + S-adenosyl-L-homocysteine + H(+). The protein operates within alkaloid biosynthesis. In terms of biological role, 6-hydroxytryprostatin B O-methyltransferase; part of the gene cluster that mediates the biosynthesis of fumitremorgins, indole alkaloids that carry not only intriguing chemical structures, but also interesting biological and pharmacological activities. The biosynthesis of fumitremorgin-type alkaloids begins by condensation of the two amino acids L-tryptophan and L-proline to brevianamide F, catalyzed by the non-ribosomal peptide synthetase ftmA. Brevianamide F is then prenylated by the prenyltransferase ftmPT1/ftmB in the presence of dimethylallyl diphosphate, resulting in the formation of tryprostatin B. The three cytochrome P450 monooxygenases, ftmP450-1/ftmC, ftmP450-2/ftmE and ftmP450-3/FtmG, are responsible for the conversion of tryprostatin B to 6-hydroxytryprostatin B, tryprostatin A to fumitremorgin C and fumitremorgin C to 12,13-dihydroxyfumitremorgin C, respectively. The putative methyltransferase ftmMT/ftmD is expected for the conversion of 6-hydroxytryprostatin B to tryprostatin A. FtmPT2/FtmH catalyzes the prenylation of 12,13-dihydroxyfumitre-morgin C in the presence of dimethylallyl diphosphate, resulting in the formation of fumitremorgin B. Fumitremorgin B is further converted to verruculogen by ftmOx1/ftmF via the insertion of an endoperoxide bond between the two prenyl moieties. In some fungal species, verruculogen is further converted to fumitremorgin A, but the enzymes involved in this step have not been identified yet. The polypeptide is 6-hydroxytryprostatin B O-methyltransferase (Aspergillus fumigatus (Neosartorya fumigata)).